The chain runs to 563 residues: Sulfite reductase [NADPH] hemoprotein beta-component (563 aa).

[4Fe-4S] cluster-binding residues include C427, C433, C472, and C476. C476 provides a ligand contact to siroheme.

The protein belongs to the nitrite and sulfite reductase 4Fe-4S domain family. As to quaternary structure, alpha(8)-beta(8). The alpha component is a flavoprotein, the beta component is a hemoprotein. It depends on siroheme as a cofactor. [4Fe-4S] cluster is required as a cofactor.

It carries out the reaction hydrogen sulfide + 3 NADP(+) + 3 H2O = sulfite + 3 NADPH + 4 H(+). The protein operates within sulfur metabolism; hydrogen sulfide biosynthesis; hydrogen sulfide from sulfite (NADPH route): step 1/1. Its function is as follows. Component of the sulfite reductase complex that catalyzes the 6-electron reduction of sulfite to sulfide. This is one of several activities required for the biosynthesis of L-cysteine from sulfate. This is Sulfite reductase [NADPH] hemoprotein beta-component from Shewanella frigidimarina (strain NCIMB 400).